A 182-amino-acid polypeptide reads, in one-letter code: UPF0149 protein CGSHiEE_07975 (182 aa).

The protein belongs to the UPF0149 family.

The chain is UPF0149 protein CGSHiEE_07975 from Haemophilus influenzae (strain PittEE).